The sequence spans 433 residues: tRNA-2-methylthio-N(6)-dimethylallyladenosine synthase (433 aa).

Positions 4–119 (KKLFIQTLGC…ITQAIKTPKF (116 aa)) constitute an MTTase N-terminal domain. Positions 13, 50, 82, 151, 155, and 158 each coordinate [4Fe-4S] cluster. The 234-residue stretch at 137 to 370 (RNSIYKSYIN…QNRHSEILDE (234 aa)) folds into the Radical SAM core domain. The TRAM domain maps to 373 to 433 (KKQENKTFKV…KRMVLYGEII (61 aa)).

Belongs to the methylthiotransferase family. MiaB subfamily. Monomer. [4Fe-4S] cluster is required as a cofactor.

It is found in the cytoplasm. The enzyme catalyses N(6)-dimethylallyladenosine(37) in tRNA + (sulfur carrier)-SH + AH2 + 2 S-adenosyl-L-methionine = 2-methylsulfanyl-N(6)-dimethylallyladenosine(37) in tRNA + (sulfur carrier)-H + 5'-deoxyadenosine + L-methionine + A + S-adenosyl-L-homocysteine + 2 H(+). Catalyzes the methylthiolation of N6-(dimethylallyl)adenosine (i(6)A), leading to the formation of 2-methylthio-N6-(dimethylallyl)adenosine (ms(2)i(6)A) at position 37 in tRNAs that read codons beginning with uridine. In Campylobacter jejuni subsp. doylei (strain ATCC BAA-1458 / RM4099 / 269.97), this protein is tRNA-2-methylthio-N(6)-dimethylallyladenosine synthase.